A 231-amino-acid chain; its full sequence is Class II histocompatibility antigen, B-L beta chain (231 aa).

A beta-1 region spans residues 1-89 (FFQWSATVEC…IVAPLTLQRR (89 aa)). The Extracellular segment spans residues 1-194 (FFQWSATVEC…PGDVSRSKLL (194 aa)). 2 disulfide bridges follow: Cys10-Cys74 and Cys111-Cys167. N-linked (GlcNAc...) asparagine glycosylation is present at Asn14. The interval 90–182 (EPKVRIFALQ…SLQQPITQRW (93 aa)) is beta-2. In terms of domain architecture, Ig-like C1-type spans 91-179 (PKVRIFALQS…EHTSLQQPIT (89 aa)). The connecting peptide stretch occupies residues 183–194 (EPPGDVSRSKLL). Residues 195 to 219 (MGVGGFVLGLVYLALGIFFFLCSKK) form a helical membrane-spanning segment. Residues 220-231 (GQPDPTSPGILN) lie on the Cytoplasmic side of the membrane.

This sequence belongs to the MHC class II family.

The protein resides in the membrane. This is Class II histocompatibility antigen, B-L beta chain from Gallus gallus (Chicken).